The chain runs to 553 residues: Formate--tetrahydrofolate ligase (553 aa).

65–72 (TPAGEGKS) lines the ATP pocket.

The protein belongs to the formate--tetrahydrofolate ligase family.

The catalysed reaction is (6S)-5,6,7,8-tetrahydrofolate + formate + ATP = (6R)-10-formyltetrahydrofolate + ADP + phosphate. Its pathway is one-carbon metabolism; tetrahydrofolate interconversion. This chain is Formate--tetrahydrofolate ligase, found in Brachyspira hyodysenteriae (strain ATCC 49526 / WA1).